The primary structure comprises 99 residues: Aspartyl/glutamyl-tRNA(Asn/Gln) amidotransferase subunit C (99 aa).

This sequence belongs to the GatC family. As to quaternary structure, heterotrimer of A, B and C subunits.

The catalysed reaction is L-glutamyl-tRNA(Gln) + L-glutamine + ATP + H2O = L-glutaminyl-tRNA(Gln) + L-glutamate + ADP + phosphate + H(+). The enzyme catalyses L-aspartyl-tRNA(Asn) + L-glutamine + ATP + H2O = L-asparaginyl-tRNA(Asn) + L-glutamate + ADP + phosphate + 2 H(+). In terms of biological role, allows the formation of correctly charged Asn-tRNA(Asn) or Gln-tRNA(Gln) through the transamidation of misacylated Asp-tRNA(Asn) or Glu-tRNA(Gln) in organisms which lack either or both of asparaginyl-tRNA or glutaminyl-tRNA synthetases. The reaction takes place in the presence of glutamine and ATP through an activated phospho-Asp-tRNA(Asn) or phospho-Glu-tRNA(Gln). The sequence is that of Aspartyl/glutamyl-tRNA(Asn/Gln) amidotransferase subunit C from Burkholderia vietnamiensis (strain G4 / LMG 22486) (Burkholderia cepacia (strain R1808)).